Here is a 96-residue protein sequence, read N- to C-terminus: Neurotoxin beta-KTx 31.1 (96 aa).

The N-terminal stretch at 1 to 21 (MQAKRTILLLLLLGMVALSSC) is a signal peptide. A propeptide spanning residues 22 to 29 (GLREKHVQ) is cleaved from the precursor. The BetaSPN-type CS-alpha/beta domain occupies 56-93 (QYGCPIIKDYCSFHCNDLEKHEGYCHGTKCKCNIPNQY). 3 cysteine pairs are disulfide-bonded: cysteine 59–cysteine 80, cysteine 66–cysteine 85, and cysteine 70–cysteine 87.

This sequence belongs to the long chain scorpion toxin family. Class 1 subfamily. In terms of tissue distribution, expressed by the venom gland.

It is found in the secreted. Functionally, inhibits voltage-gated potassium channel. The sequence is that of Neurotoxin beta-KTx 31.1 from Lychas mucronatus (Chinese swimming scorpion).